A 213-amino-acid polypeptide reads, in one-letter code: Adenylate kinase (213 aa).

10 to 15 is a binding site for ATP; it reads GAGKGT. The segment at 30-59 is NMP; sequence AVGDIFRTIIKTSTSEAELINNYVKQGALI. AMP contacts are provided by residues Arg-36, 57–59, 85–88, and Gln-92; these read ALI and GYPR. The segment at 123–161 is LID; it reads GRYSCKNCGKIYNVHFLQPKTDYVCDVCSSNVFDYRRDD. Arg-124 is an ATP binding site. The Zn(2+) site is built by Cys-127 and Cys-130. 133 to 134 is a binding site for ATP; sequence IY. 2 residues coordinate Zn(2+): Cys-147 and Cys-150. AMP contacts are provided by Arg-158 and Arg-169. Lys-197 provides a ligand contact to ATP.

It belongs to the adenylate kinase family. As to quaternary structure, monomer.

Its subcellular location is the cytoplasm. It catalyses the reaction AMP + ATP = 2 ADP. It functions in the pathway purine metabolism; AMP biosynthesis via salvage pathway; AMP from ADP: step 1/1. Catalyzes the reversible transfer of the terminal phosphate group between ATP and AMP. Plays an important role in cellular energy homeostasis and in adenine nucleotide metabolism. The protein is Adenylate kinase of Rickettsia typhi (strain ATCC VR-144 / Wilmington).